The sequence spans 87 residues: UPF0367 protein Pro_0144 (87 aa).

It belongs to the UPF0367 family.

The sequence is that of UPF0367 protein Pro_0144 from Prochlorococcus marinus (strain SARG / CCMP1375 / SS120).